The following is a 691-amino-acid chain: Elongation factor G (691 aa).

The region spanning 8–282 is the tr-type G domain; it reads EKTRNIGIMA…AVVDYLPSPV (275 aa). Residues 17–24, 81–85, and 135–138 contribute to the GTP site; these read AHIDAGKT, DTPGH, and NKMD.

It belongs to the TRAFAC class translation factor GTPase superfamily. Classic translation factor GTPase family. EF-G/EF-2 subfamily.

It is found in the cytoplasm. In terms of biological role, catalyzes the GTP-dependent ribosomal translocation step during translation elongation. During this step, the ribosome changes from the pre-translocational (PRE) to the post-translocational (POST) state as the newly formed A-site-bound peptidyl-tRNA and P-site-bound deacylated tRNA move to the P and E sites, respectively. Catalyzes the coordinated movement of the two tRNA molecules, the mRNA and conformational changes in the ribosome. This is Elongation factor G from Caldicellulosiruptor saccharolyticus (strain ATCC 43494 / DSM 8903 / Tp8T 6331).